The following is an 822-amino-acid chain: Dimethyl sulfoxide/trimethylamine N-oxide reductase (822 aa).

A signal peptide (tat-type signal) is located at residues 1 to 42 (MTKLSGQELHAELSRRAFLSYTAAVGALGLCGTSLLAQGARA). Mo-bis(molybdopterin guanine dinucleotide) contacts are provided by residues Trp158, 158–160 (WKS), Ser189, 232–233 (KT), 262–263 (IN), 283–285 (QTD), 364–365 (WS), Arg368, Asn476, His480, 500–501 (QD), Arg523, Asp553, 683–686 (ASHP), Arg689, 691–693 (HSQ), Asn779, and 796–797 (GQ).

This sequence belongs to the prokaryotic molybdopterin-containing oxidoreductase family. Homodimer. It depends on Mo-bis(molybdopterin guanine dinucleotide) as a cofactor. Post-translationally, predicted to be exported by the Tat system. The position of the signal peptide cleavage has been experimentally proven.

It localises to the periplasm. The catalysed reaction is dimethyl sulfide + a menaquinone + H2O = dimethyl sulfoxide + a menaquinol. The enzyme catalyses trimethylamine + 2 Fe(III)-[cytochrome c] + H2O = trimethylamine N-oxide + 2 Fe(II)-[cytochrome c] + 3 H(+). Catalyzes the reduction of dimethyl sulfoxide (DMSO) and trimethylamine N-oxide (TMAO) to dimethyl sulfide (DMS) and trimethylamine, respectively. The terminal DMSO reductase can also use various sulfoxides and N-oxide compounds as terminal electron acceptor in addition to DMSO and TMAO. In Cereibacter sphaeroides (Rhodobacter sphaeroides), this protein is Dimethyl sulfoxide/trimethylamine N-oxide reductase (dmsA).